Here is a 515-residue protein sequence, read N- to C-terminus: RNA exonuclease NGL2 (515 aa).

Disordered stretches follow at residues 1–54 (MTQD…SKPI) and 353–381 (RDGE…PVPE). Residues 21 to 34 (EINKSVKDAKHQTN) are compositionally biased toward basic and acidic residues. Residues 40–52 (QHKKKGKKGKKSK) show a composition bias toward basic residues. Positions 369-381 (KYGKDQPESPVPE) are enriched in basic and acidic residues.

The protein belongs to the CCR4/nocturin family.

The protein resides in the cytoplasm. It localises to the nucleus. Its function is as follows. Involved in pre-rRNA processing. Required for the final stage of 3'-end maturation of 5.8S rRNA at site E. In Saccharomyces cerevisiae (strain ATCC 204508 / S288c) (Baker's yeast), this protein is RNA exonuclease NGL2 (NGL2).